The chain runs to 139 residues: NADPH-dependent 7-cyano-7-deazaguanine reductase (139 aa).

Cys-34 functions as the Thioimide intermediate in the catalytic mechanism. Asp-41 functions as the Proton donor in the catalytic mechanism. Substrate-binding positions include Val-56 to Leu-58 and His-75 to Glu-76.

This sequence belongs to the GTP cyclohydrolase I family. QueF type 1 subfamily.

It is found in the cytoplasm. It carries out the reaction 7-aminomethyl-7-carbaguanine + 2 NADP(+) = 7-cyano-7-deazaguanine + 2 NADPH + 3 H(+). It participates in tRNA modification; tRNA-queuosine biosynthesis. Catalyzes the NADPH-dependent reduction of 7-cyano-7-deazaguanine (preQ0) to 7-aminomethyl-7-deazaguanine (preQ1). The sequence is that of NADPH-dependent 7-cyano-7-deazaguanine reductase from Thiobacillus denitrificans (strain ATCC 25259 / T1).